Here is a 968-residue protein sequence, read N- to C-terminus: MPFALGQRWISDTESELGLGTVVQVEGRMVTLLFPATGENRMFSRAEAPLTRVIFNPNDTVESHEGWSITVTEVVEKDQLVVYHGTHSETGETVSLRETLISHNIRFNKPQDRLFAGQIDRLDRFGIRYQCQLLRHKLASSDLLGLQGPRVGLIAHQQWIAHEVGRRYAPRVLLADEVGLGKTIEAGLIMHQQLLTGRAERILVIVPDTLRHQWLVEMLRRFNLRFSVFDEDRCVEAYADNDNPFYTEQLVICSLELLRKKKRLDQALDADWDLLVVDEAHHLEWSEDAPSRAYQVVEALSEVVPGVLLLTATPDQLGHQSHFARLRLLDPDRFYDYDAFLTEEQGYQAVAEAAEALSGEKKLNDSAINSLTELLSEKDIAPSIRLIQANEVDPEQQQAARDGLLQELLDRHGTGRVLYRNSRASVKGFPKRIFNPHPQAMPEQYVTAERVNAMMSGKKTPQAKALEALSPEKLYQAFESDSASWWKFDTRVDWLIAFLKSHRSKKVLIIASQAETALSLEEALRTREGILATVFHEGMSIIERDKAGAYFAQEDAGAQALICSEIGSEGRNFQFASHLVLFDLPLNPDLLEQRIGRLDRIGQKNDIQIHLPYLEGTAQERLMQWYHHGLNAFELTCPSGHVLFNEFAEELTQVLCEDDADAMTQLLNHTQHKYKELKQAMERGRDKLLEINSHGGARAAALIERLAQKDNDTHLVGSVIRLWDIIGVDQEDNGENTIVLRPSEHMLFPTYPGLPEDGVTVTFDRETALSRDDIAFISEEHPLVQTGLDLITGSETGTTSVAVLKNKALPAGTLFLELIYMADASAPKSSQLYRYLPPTPIRVLLDKNGNNLATKVDYNNFEKQLSAVNRHIASKLVNASQPLLHPLLAKGQEQAQQGLDALLVDARASMTSQLTAELERLEALKAVNPNIREEELEYVRNQMAELNGYLDASQLQLDAIRMVLVSHV.

Residues 163-332 enclose the Helicase ATP-binding domain; it reads EVGRRYAPRV…FARLRLLDPD (170 aa). 176–183 serves as a coordination point for ATP; it reads DEVGLGKT. The DEAH box signature appears at 278-281; that stretch reads DEAH. Positions 491 to 641 constitute a Helicase C-terminal domain; that stretch reads RVDWLIAFLK…AFELTCPSGH (151 aa).

This sequence belongs to the SNF2/RAD54 helicase family. RapA subfamily. In terms of assembly, interacts with the RNAP. Has a higher affinity for the core RNAP than for the holoenzyme. Its ATPase activity is stimulated by binding to RNAP.

Its function is as follows. Transcription regulator that activates transcription by stimulating RNA polymerase (RNAP) recycling in case of stress conditions such as supercoiled DNA or high salt concentrations. Probably acts by releasing the RNAP, when it is trapped or immobilized on tightly supercoiled DNA. Does not activate transcription on linear DNA. Probably not involved in DNA repair. This Shewanella denitrificans (strain OS217 / ATCC BAA-1090 / DSM 15013) protein is RNA polymerase-associated protein RapA.